Here is a 1771-residue protein sequence, read N- to C-terminus: MSFQQTNNNATNNINSLEELAAQELIAAQFEGNLDGFFCTFYVQSKPQLLDLESECYCMDDFDCGCDRIKREEELRKLIFLTSDVYGYNFEEWKGLVWKFVQNYCPEHRYGSTFGNGLLIVSPRFFMDHLDWFQQWKLVSSNDECRAFLRKRTQLLMSGDVESNPGPVQSRPVYACDNDPRAIRLEKALQRRDEKISTLIKKLRQEIKNNRIYTQGFFDDLKGAKGEVGQLNGNLTRICDFLENSLPTLTAQIQTTVLTTTDKYVNLKEDLLKVAILLVLVRLLMVWKKYRAALIVIILFVMHFYGFDKQILDIVLDLKDKILQTTTQAGTETLEEVVYHPWFDTCGKLIFAVLAFFAIKKIPGKQDWDNYISRLDRIPKAIEGSKKIVDYCSEYFNLSVDEVKKVVLGKELKGTQGLYDEIHVWAKEIRHYLDLDERNKITLDTETAAKVEDLYKRGLKYSEEKIPDRDIARFITTMLFPAKSLYEQVLLSPVKGGGPKMRPITVWLTGESGIGKTQMIYPLCIDILREMGIVKPDAYKHQAYARQVETEYWDGYNGQKIVIYDDAFQLKDDKTKPNPEIFEVIRTCNTFPQHLHMAALQDKNMYSQAEVLLYTTNQFQVQLESITFPDAFYNRMKTHAYRVQIKQEKSIWVRNARGEEYNALDVTKLNKDEAIDLSVYEFQKMRFDDESATKWIDDGEPISYDEFARTICKAWKEEKEKTFHQLQWLEAYASRTVAQGGSETSEYYDVWDETYFSNLLSQGFMAGKSLIEMEAEFASDAETFNAYIEYKKNIPKETKWSKWMTILDEQISALSTKIRELKNKAYKFISEHPYLTALGFIGVMISAFAMYSFFERTLTDDTITSEVGSSGDNKTQKISKRVVEVGGSGDVKTTKPAKTAVEVGSSGDSKTMKNKITKVEVGSSGDSKTQKQRNTKVEVGKELEKEAETQGCSDPAAHALVLDVLQKNTYCLYYERMVKGEMKRYRLATATFLRGWVCMMPYHFIETLYARKVAPSTNIYFSQPNCDDVIVVPVSHFIAPNAERVELTTACTRIHYKDETPRDCVLVNLHRRMCHPHRDILKHFVKKSDQGNLRGVFQGTLATFHQSANELCRAYQWLQAIRPLDQEITIYHEDTDMFDYESESYTQRDCYEYNAPTQTGNCGSIVGLYNKRMERKLIGMHIPGNVSECHGYACPLTQEAIMDGLNRLEKLDPVNNITVQCCFEPPSDIKDTMSGETPEGKFCAIGKSNIKVGQAVKTTLLKSCIYGMLSKPITKPAHLTRTRLPNGEIVDPLMKGLKKCGVDTAVLDAEIVESAALDVKQVVLTQYNSMLDVNKYRRFLTYEEATQGTGDDDFMKGIARQTSPGYRYFQMPRKLPGKQDWMGSGEQYDFTSQRAQELRRDVEELIDNCAKGIIKDVVFVDTLKDERRPIEKVDAGKTRVFSAGPQHFVVAFRKYFLPFAAYLMNNRIDNEIAVGTNVYSTDWERIAKRLKKHGNKVIAGDFGNFDGSLVAQFFGQSCGKSFYPWFKTFNDVNTEDGKRNLMICIGLWTHIVHSVHSYGDNVYMWTHSQPSGNPFTVIINCLYNSMIMRIVWILLARKLAPEMQSMKKFRENVSMISYGDDNCLNISDRVVEWFNQITISEQMKEIKHEYTDEGKTGDMVKFPSLSEIHFLKKRFVFSHQLQRTVAPLQKDVIYEMLNWTRNTIDPNEILMMNINTAFREIVYHGKSEYQKLRSGIEDLAMKGILPQQPQILTFKAYLWDATMLADEVYDF.

Residues 1 to 29 (MSFQQTNNNATNNINSLEELAAQELIAAQ) adopt a coiled-coil conformation. The segment at 16-25 (SLEELAAQEL) is BC-box. The segment at 106–114 (PEHRYGSTF) is interaction with and inhibition of host AGO2. One can recognise an SF3 helicase domain in the interval 482–656 (AKSLYEQVLL…QEKSIWVRNA (175 aa)). Position 510 to 517 (510 to 517 (GESGIGKT)) interacts with ATP. Positions 919-942 (VEVGSSGDSKTQKQRNTKVEVGKE) are disordered. Positions 954–1201 (DPAAHALVLD…YACPLTQEAI (248 aa)) constitute a Peptidase C3 domain. Catalysis depends on for picornain 3C-like protease activity residues H1003, D1063, and C1162. The stretch at 1385–1413 (GEQYDFTSQRAQELRRDVEELIDNCAKGI) forms a coiled coil. Residues 1495–1634 (NKVIAGDFGN…NISDRVVEWF (140 aa)) form the RdRp catalytic domain.

Interacts with host AGO2; this interaction leads to AGO2 degradation via an E3 ubiquitin ligase-dependent pathway and may block the RNA-induced silencing complexes (RISC) activity. In terms of processing, might be expressed through a ribosomal skip from one codon to the next without formation of a peptide bond.

Its subcellular location is the host cytoplasm. It localises to the host perinuclear region. The catalysed reaction is RNA(n) + a ribonucleoside 5'-triphosphate = RNA(n+1) + diphosphate. Suppressor of RNA-mediated gene silencing, an antiviral defense mechanism of insect cells. Inhibits siRNA function through the direct enzymatic inactivation of host AGO2, but does not interfere with miRNA pathway. Facilitates viral replication via the recruitment of a cellular ubiquitin ligase complex that promotes host AGO2 degradation. Inhibits the integrated stress response (ISR) in the infected cell possiby by degrading host Nup358. Stress granule formation is thus inhibited, which allows protein synthesis and viral replication. Does not bind to dsRNA or siRNA. In terms of biological role, replicates the genomic and antigenomic RNA. This Teleogryllus oceanicus (black field cricket) protein is Replicase polyprotein.